The sequence spans 212 residues: Ion-translocating oxidoreductase complex subunit G (212 aa).

Residues 9-29 (ASLLGLFALLCTALVALVNQF) traverse the membrane as a helical segment. FMN phosphoryl threonine is present on Thr-176.

Belongs to the RnfG family. In terms of assembly, the complex is composed of six subunits: RnfA, RnfB, RnfC, RnfD, RnfE and RnfG. FMN is required as a cofactor.

Its subcellular location is the cell inner membrane. Functionally, part of a membrane-bound complex that couples electron transfer with translocation of ions across the membrane. The protein is Ion-translocating oxidoreductase complex subunit G of Shewanella loihica (strain ATCC BAA-1088 / PV-4).